The sequence spans 379 residues: Chaperone protein DnaJ (379 aa).

The 66-residue stretch at 6–71 (DYYEVLGVDK…QKRSRYDQFG (66 aa)) folds into the J domain. The CR-type zinc finger occupies 138 to 220 (GVEREINVSK…CNGKGRLRST (83 aa)). Residues Cys-151, Cys-154, Cys-168, Cys-171, Cys-194, Cys-197, Cys-208, and Cys-211 each coordinate Zn(2+). 4 CXXCXGXG motif repeats span residues 151-158 (CSKCTGSG), 168-175 (CNHCNGTG), 194-201 (CDACKGEG), and 208-215 (CPACNGKG).

Belongs to the DnaJ family. As to quaternary structure, homodimer. Requires Zn(2+) as cofactor.

Its subcellular location is the cytoplasm. Its function is as follows. Participates actively in the response to hyperosmotic and heat shock by preventing the aggregation of stress-denatured proteins and by disaggregating proteins, also in an autonomous, DnaK-independent fashion. Unfolded proteins bind initially to DnaJ; upon interaction with the DnaJ-bound protein, DnaK hydrolyzes its bound ATP, resulting in the formation of a stable complex. GrpE releases ADP from DnaK; ATP binding to DnaK triggers the release of the substrate protein, thus completing the reaction cycle. Several rounds of ATP-dependent interactions between DnaJ, DnaK and GrpE are required for fully efficient folding. Also involved, together with DnaK and GrpE, in the DNA replication of plasmids through activation of initiation proteins. The chain is Chaperone protein DnaJ from Ruminiclostridium cellulolyticum (strain ATCC 35319 / DSM 5812 / JCM 6584 / H10) (Clostridium cellulolyticum).